We begin with the raw amino-acid sequence, 566 residues long: Glutamate--tRNA ligase (566 aa).

A 'HIGH' region motif is present at residues 93–103 (PNPDYTIHLGN).

It belongs to the class-I aminoacyl-tRNA synthetase family. Glutamate--tRNA ligase type 2 subfamily.

It localises to the cytoplasm. It carries out the reaction tRNA(Glu) + L-glutamate + ATP = L-glutamyl-tRNA(Glu) + AMP + diphosphate. Functionally, catalyzes the attachment of glutamate to tRNA(Glu) in a two-step reaction: glutamate is first activated by ATP to form Glu-AMP and then transferred to the acceptor end of tRNA(Glu). This is Glutamate--tRNA ligase from Staphylothermus marinus (strain ATCC 43588 / DSM 3639 / JCM 9404 / F1).